The sequence spans 1230 residues: ABC transporter B family member 5 (1230 aa).

6 consecutive transmembrane segments (helical) span residues 27–47 (VLLM…SPLM), 78–98 (LVYL…CWMI), 154–174 (FIQL…RGWL), 177–197 (LVML…AIIV), 253–273 (GFVT…TYAL), and 286–306 (GYTG…SIAL). One can recognise an ABC transmembrane type-1 1 domain in the interval 30 to 318 (MIVGSIGAIA…ASPCLTAFTA (289 aa)). The 237-residue stretch at 353 to 589 (IELRDVCFSY…HEGAYSQLLR (237 aa)) folds into the ABC transporter 1 domain. 388-395 (GESGSGKS) is a binding site for ATP. 3 N-linked (GlcNAc...) asparagine glycosylation sites follow: asparagine 540, asparagine 615, and asparagine 616. Residues 602–621 (ISDGSISSGSSRGNNSTRQD) are disordered. Residues 603–617 (SDGSISSGSSRGNNS) are compositionally biased toward low complexity. Helical transmembrane passes span 662-682 (ILIL…IFGI) and 707-727 (MIFV…NYLF). One can recognise an ABC transmembrane type-1 2 domain in the interval 663–950 (LILGTLVGAV…ASSFAPDSSK (288 aa)). Residue asparagine 759 is glycosylated (N-linked (GlcNAc...) asparagine). 3 helical membrane passes run 798 to 818 (IIAF…IPFI), 889 to 909 (GVGF…CFYV), and 924 to 944 (VFQV…ASSF). In terms of domain architecture, ABC transporter 2 spans 985–1223 (IELCHISFTY…EGGVYASLVQ (239 aa)). 1020–1027 (GESGSGKS) is a binding site for ATP. Residues asparagine 1074, asparagine 1174, and asparagine 1227 are each glycosylated (N-linked (GlcNAc...) asparagine).

The protein belongs to the ABC transporter superfamily. ABCB family. Multidrug resistance exporter (TC 3.A.1.201) subfamily.

Its subcellular location is the membrane. This Arabidopsis thaliana (Mouse-ear cress) protein is ABC transporter B family member 5 (ABCB5).